Consider the following 381-residue polypeptide: Prolargin (381 aa).

Positions 1–21 (MRSSLCWLLTLLLILATAAQG) are cleaved as a signal peptide. Residues 19-65 (AQGQPTRRPRPRPRPRPRPRLRPTPSFPQPDEPTEPTDLPPPLPPGP) form a disordered region. Over residues 25 to 39 (RRPRPRPRPRPRPRL) the composition is skewed to basic residues. A compositionally biased stretch (pro residues) spans 56 to 65 (DLPPPLPPGP). LRR repeat units follow at residues 94-113 (RKVP…NNFI), 114-137 (TELP…NNRI), 138-161 (RKVD…KNQL), 162-182 (EEVP…QNQI), 183-206 (SRIP…HNKL), 207-232 (SDGV…HNTL), 233-253 (RKMP…SNRI), 254-277 (EAIP…YNQL), 278-302 (SDRG…HNRI), 303-322 (SSVP…NNSI), 323-361 (EKIN…GNYL), and 362-381 (KPPI…SVVI). N-linked (GlcNAc...) asparagine glycosylation is present at N123. 3 N-linked (GlcNAc...) asparagine glycosylation sites follow: N288, N319, and N326. Residues C331 and C372 are joined by a disulfide bond.

The protein belongs to the small leucine-rich proteoglycan (SLRP) family. SLRP class II subfamily. Binds the basement membrane heparan sulfate proteoglycan perlecan and triple helical collagens type I and type II. Post-translationally, glycosylated; contains heparan sulfate.

It is found in the secreted. The protein localises to the extracellular space. It localises to the extracellular matrix. Its function is as follows. May anchor basement membranes to the underlying connective tissue. The protein is Prolargin (PRELP) of Bos taurus (Bovine).